The following is a 413-amino-acid chain: Cardiolipin synthase B (413 aa).

2 PLD phosphodiesterase domains span residues 108–135 (VFRRMHRKIVVIDARIAFIGGLNYSSEH) and 285–312 (RRRPLHGKVALMDDHWATVGSSNLDPLS). Active-site residues include His113, Lys115, Asp120, His290, Lys292, and Asp297. A disordered region spans residues 388 to 413 (TQVDPPAQPTMETQDRVETENTGVNP).

It belongs to the phospholipase D family. Cardiolipin synthase subfamily. ClsB sub-subfamily.

It is found in the cell membrane. The catalysed reaction is 2 a 1,2-diacyl-sn-glycero-3-phospho-(1'-sn-glycerol) = a cardiolipin + glycerol. Its function is as follows. Catalyzes the phosphatidyl group transfer from one phosphatidylglycerol molecule to another to form cardiolipin (CL) (diphosphatidylglycerol) and glycerol. In Shigella flexneri, this protein is Cardiolipin synthase B.